The sequence spans 432 residues: Trigger factor (432 aa).

In terms of domain architecture, PPIase FKBP-type spans 161–246; that stretch reads GSRATIDFVG…LNKVEARELP (86 aa).

It belongs to the FKBP-type PPIase family. Tig subfamily.

The protein resides in the cytoplasm. The catalysed reaction is [protein]-peptidylproline (omega=180) = [protein]-peptidylproline (omega=0). Involved in protein export. Acts as a chaperone by maintaining the newly synthesized protein in an open conformation. Functions as a peptidyl-prolyl cis-trans isomerase. In Vibrio atlanticus (strain LGP32) (Vibrio splendidus (strain Mel32)), this protein is Trigger factor.